Here is a 530-residue protein sequence, read N- to C-terminus: Calcium-dependent protein kinase 14 (530 aa).

Glycine 2 carries N-myristoyl glycine lipidation. In terms of domain architecture, Protein kinase spans 54–312; sequence YKLGRELGRG…AQQVLDHPWI (259 aa). Residues 60-68 and lysine 83 each bind ATP; that span reads LGRGEFGVT. Catalysis depends on aspartate 178, which acts as the Proton acceptor. A Phosphoserine modification is found at serine 218. The autoinhibitory domain stretch occupies residues 318 to 348; that stretch reads ASNVSLGETVRARLKQFSVMNKLKKRALRVI. 4 consecutive EF-hand domains span residues 355 to 390, 391 to 426, 427 to 462, and 463 to 498; these read EETS…LGIV, VPQD…IRKL, GNDE…DVDT, and TSEE…GTDW. Ca(2+) is bound by residues aspartate 368, serine 370, lysine 374, glutamate 379, aspartate 404, aspartate 406, aspartate 408, tyrosine 410, glutamate 415, aspartate 440, asparagine 442, serine 444, tyrosine 446, glutamate 451, aspartate 476, asparagine 478, aspartate 480, and lysine 482. Phosphoserine is present on serine 484. Glutamate 487 is a Ca(2+) binding site.

This sequence belongs to the protein kinase superfamily. Ser/Thr protein kinase family. CDPK subfamily.

It localises to the membrane. It catalyses the reaction L-seryl-[protein] + ATP = O-phospho-L-seryl-[protein] + ADP + H(+). The catalysed reaction is L-threonyl-[protein] + ATP = O-phospho-L-threonyl-[protein] + ADP + H(+). With respect to regulation, activated by calcium. Autophosphorylation may play an important role in the regulation of the kinase activity. Its function is as follows. May play a role in signal transduction pathways that involve calcium as a second messenger. The sequence is that of Calcium-dependent protein kinase 14 (CPK14) from Arabidopsis thaliana (Mouse-ear cress).